The primary structure comprises 302 residues: tRNA dimethylallyltransferase 2 (302 aa).

ATP is bound at residue 6–13 (GPTACGKT). 8–13 (TACGKT) contributes to the substrate binding site. 2 interaction with substrate tRNA regions span residues 31 to 34 (DSRQ) and 154 to 158 (QRAIR).

It belongs to the IPP transferase family. As to quaternary structure, monomer. Requires Mg(2+) as cofactor.

It catalyses the reaction adenosine(37) in tRNA + dimethylallyl diphosphate = N(6)-dimethylallyladenosine(37) in tRNA + diphosphate. In terms of biological role, catalyzes the transfer of a dimethylallyl group onto the adenine at position 37 in tRNAs that read codons beginning with uridine, leading to the formation of N6-(dimethylallyl)adenosine (i(6)A). The polypeptide is tRNA dimethylallyltransferase 2 (Porphyromonas gingivalis (strain ATCC BAA-308 / W83)).